A 637-amino-acid polypeptide reads, in one-letter code: Chaperone protein DnaK (637 aa).

The residue at position 203 (T203) is a Phosphothreonine; by autocatalysis. The tract at residues 600 to 637 (SAVYGQQQEQGAPAQEEPSAEGKKNDDEGTVEGEFREV) is disordered. Positions 604–616 (GQQQEQGAPAQEE) are enriched in low complexity. Positions 619–637 (AEGKKNDDEGTVEGEFREV) are enriched in basic and acidic residues.

This sequence belongs to the heat shock protein 70 family.

Its function is as follows. Acts as a chaperone. The chain is Chaperone protein DnaK from Dehalococcoides mccartyi (strain ATCC BAA-2266 / KCTC 15142 / 195) (Dehalococcoides ethenogenes (strain 195)).